Consider the following 600-residue polypeptide: Kelch-like protein 24 (600 aa).

The BTB domain maps to 66 to 133 (TDVIICVEGK…VYTGKVKITT (68 aa)). Residues 168–270 (CLGIQRFADT…HPNYFVQTVE (103 aa)) enclose the BACK domain. Kelch repeat units lie at residues 314–363 (VIVV…ALRN), 365–407 (ILVS…VLLG), 408–454 (KVYV…SCVG), 456–502 (LFVI…SLNN), 504–544 (IYVA…VCNG), and 546–592 (IYIL…TIHR).

In terms of assembly, forms homodimers. Interacts with GRIK2. Component of the BCR(KLHL24) E3 ubiquitin ligase complex, composed of CUL3, RBX1 and KLHL24. Interacts with CUL3. Interacts with KRT14. Post-translationally, autoubiquitinated. Autoubiquitination leads to proteasomal degradation and is necessary to control KLHL24 levels. As to expression, expressed in the skin. Found in keratinocytes, dermal fibroblasts, and melanocytes. Basal-layer keratinocytes have lower KLHL24 expression than suprabasal keratinocytes. Expressed in the brain, spinal cord, liver, testis, heart and at higher levels in the skeletal muscle.

It is found in the perikaryon. Its subcellular location is the cell projection. The protein resides in the axon. It localises to the cytoplasm. The protein localises to the cell junction. It is found in the desmosome. Its subcellular location is the adherens junction. Necessary to maintain the balance between intermediate filament stability and degradation, a process that is essential for skin integrity. As part of the BCR(KLHL24) E3 ubiquitin ligase complex, mediates ubiquitination of KRT14 and controls its levels during keratinocytes differentiation. Specifically reduces kainate receptor-mediated currents in hippocampal neurons, most probably by modulating channel properties. Has a crucial role in cardiac development and function. The protein is Kelch-like protein 24 (KLHL24) of Homo sapiens (Human).